Here is a 3432-residue protein sequence, read N- to C-terminus: Genome polyprotein (3432 aa).

The interval 2-15 is interaction with host EXOC1; the sequence is TKKPGGPGKNRAIN. The Cytoplasmic segment spans residues 2 to 109; the sequence is TKKPGGPGKN…RKQNKRGGNE (108 aa). The segment at 37–72 is hydrophobic; homodimerization of capsid protein C; sequence LLDGRGPVRFVLALITFFKFTALAPTKALLGRWKAV. Positions 106-127 are cleaved as a propeptide — ER anchor for the capsid protein C, removed in mature form by serine protease NS3; it reads GGNEGSIMWLASLAVVIACAGA. A helical membrane pass occupies residues 110–130; it reads GSIMWLASLAVVIACAGAMKL. Over 131 to 253 the chain is Extracellular; it reads SNFQGKLLMT…ATRYLMKTEN (123 aa). N142 is a glycosylation site (N-linked (GlcNAc...) asparagine; by host). The helical transmembrane segment at 254–274 threads the bilayer; it reads WIIRNPGYAFLAAVLGWMLGS. The Cytoplasmic segment spans residues 275–279; it reads NNGQR. The helical transmembrane segment at 280–294 threads the bilayer; sequence VVFTILLLLVAPAYS. The Extracellular segment spans residues 295–746; that stretch reads FNCLGMGNRD…QVFGGAFRTL (452 aa). 6 cysteine pairs are disulfide-bonded: C297–C324, C354–C410, C354–C415, C368–C399, C386–C410, and C386–C415. Positions 392–405 are fusion peptide; sequence DRGWGNGCGLFGKG. Residue N448 is glycosylated (N-linked (GlcNAc...) asparagine; by host). 2 disulfide bridges follow: C484-C581 and C598-C629. The helical transmembrane segment at 747 to 767 threads the bilayer; sequence FGGMSWITQGLMGALLLWMGV. Topologically, residues 768-773 are cytoplasmic; the sequence is NARDRS. A helical transmembrane segment spans residues 774 to 794; the sequence is IALAFLATGGVLVFLATNVHA. The Extracellular portion of the chain corresponds to 795–1219; the sequence is DTGCAIDITR…AFAEANSGGD (425 aa). Intrachain disulfides connect C798–C809, C849–C937, C973–C1017, C1074–C1123, C1085–C1106, and C1107–C1110. N924 and N1001 each carry an N-linked (GlcNAc...) asparagine; by host glycan. Residues 1220 to 1240 traverse the membrane as a helical segment; it reads VLHLALIAVFKIQPAFLVMNM. Residues 1241–1250 lie on the Cytoplasmic side of the membrane; the sequence is LSTRWTNQEN. A helical transmembrane segment spans residues 1251–1271; that stretch reads VVLVLGAAFFQLASVDLQIGV. A topological domain (lumenal) is located at residue H1272. The chain crosses the membrane as a helical span at residues 1273 to 1293; it reads GILNAAAIAWMIVRAITFPTT. The Cytoplasmic segment spans residues 1294–1309; that stretch reads SSVTMPVLALLTPGMR. A helical membrane pass occupies residues 1310 to 1330; it reads ALYLDTYRIILLVIGICSLLH. Topologically, residues 1331-1341 are lumenal; sequence ERKKTMAKKKG. A helical membrane pass occupies residues 1342 to 1362; the sequence is AVLLGLALTSTGWFSPTTIAA. Residues 1363 to 1374 are Cytoplasmic-facing; the sequence is GLMVCNPNKKRG. The helical transmembrane segment at 1375–1395 threads the bilayer; it reads WPATEFLSAVGLMFAIVGGLA. Residues 1396–1398 are Lumenal-facing; sequence ELD. A helical transmembrane segment spans residues 1399–1419; that stretch reads IESMSIPFMLAGLMAVSYVVS. Residues 1420–1476 lie on the Cytoplasmic side of the membrane; sequence GKATDMWLERAADISWEMDAAITGSSRRLDVKLDDDGDFHLIDDPGVPWKVWVLRMS. Positions 1427–1466 are interacts with and activates NS3 protease; that stretch reads LERAADISWEMDAAITGSSRRLDVKLDDDGDFHLIDDPGV. The segment at residues 1477-1497 is an intramembrane region (helical); the sequence is CIGLAALTPWAIVPAAFGYWL. Residues 1498-2173 lie on the Cytoplasmic side of the membrane; that stretch reads TLKTTKRGGV…RMALEELPDA (676 aa). The 178-residue stretch at 1505–1682 folds into the Peptidase S7 domain; the sequence is GGVFWDTPSP…DRQEEPVPEA (178 aa). Catalysis depends on charge relay system; for serine protease NS3 activity residues H1555, D1579, and S1639. The region spanning 1685–1841 is the Helicase ATP-binding domain; sequence PNMLRKRQMT…DSNAPIHDLQ (157 aa). Residues 1689–1692 form an important for RNA-binding region; it reads RKRQ. An ATP-binding site is contributed by 1698 to 1705; the sequence is LHPGSGKT. The short motif at 1789–1792 is the DEAH box element; that stretch reads DEAH. The Helicase C-terminal domain maps to 1852–2017; that stretch reads GYEWITEYAG…GLVAQLYGPE (166 aa). K1893 is modified (N6-acetyllysine; by host). Positions 1950–1972 are disordered; it reads NPSPITSASAAQRRGRVGRNPNQ. Residues 2168 to 2172 are regulates the ATPase activity of NS3 helicase; that stretch reads EELPD. The chain crosses the membrane as a helical span at residues 2174–2194; it reads LETITLIVAITVMTGGFFLLM. Topologically, residues 2195–2199 are lumenal; that stretch reads MQRKG. Positions 2200–2220 form an intramembrane region, helical; the sequence is IGKMGLGALVLTLATFFLWAA. Residue E2221 is a topological domain, lumenal. A helical membrane pass occupies residues 2222-2242; sequence VPGTKIAGTLLIALLLMVVLI. Residues 2243–2257 are Cytoplasmic-facing; sequence PEPEKQRSQTDNQLA. A helical membrane pass occupies residues 2258–2278; that stretch reads VFLICVLTVVGVVAANEYGML. The Lumenal portion of the chain corresponds to 2279–2311; sequence EKTKADLKSMFGGKTQASGLTGLPSMALDLRPA. Positions 2312-2332 form an intramembrane region, helical; that stretch reads TAWALYGGSTVVLTPLLKHLI. Over 2333 to 2368 the chain is Lumenal; that stretch reads TSEYVTTSLASINSQAGSLFVLPRGVPFTDLDLTVG. A helical transmembrane segment spans residues 2369–2389; it reads LVFLGCWGQITLTTFLTAMVL. Topologically, residues 2390–2444 are cytoplasmic; that stretch reads ATLHYGYMLPGWQAEALRAAQRRTAAGIMKNAVVDGMVATDVPELERTTPLMQKK. Residues 2445–2465 form a helical membrane-spanning segment; it reads VGQVLLIGVSVAAFLVNPNVT. Over 2466 to 2469 the chain is Lumenal; it reads TVRE. Residues 2470–2490 form a helical membrane-spanning segment; the sequence is AGVLVTAATLTLWDNGASAVW. At 2491-3432 the chain is on the cytoplasmic side; it reads NSTTATGLCH…DVLIQEDRVI (942 aa). Residues 2528-2793 enclose the mRNA cap 0-1 NS5-type MT domain; it reads GRPGGRTLGE…DVNLGSGTRA (266 aa). S2583 lines the S-adenosyl-L-methionine pocket. The residue at position 2583 (S2583) is a Phosphoserine. K2588 serves as the catalytic For 2'-O-MTase activity. Residues G2613, W2614, T2631, K2632, D2658, and V2659 each contribute to the S-adenosyl-L-methionine site. The active-site For 2'-O-MTase activity is D2673. Residue I2674 coordinates S-adenosyl-L-methionine. Residues K2709 and E2745 each act as for 2'-O-MTase activity in the active site. An S-adenosyl-L-methionine-binding site is contributed by Y2747. 4 residues coordinate Zn(2+): E2967, H2971, C2976, and C2979. The RdRp catalytic domain maps to 3057 to 3209; sequence GKMYADDTAG…KPLDDRFATA (153 aa). Zn(2+)-binding residues include H3244, C3260, and C3379.

It in the N-terminal section; belongs to the class I-like SAM-binding methyltransferase superfamily. mRNA cap 0-1 NS5-type methyltransferase family. Homodimer. Interacts (via N-terminus) with host EXOC1 (via C-terminus); this interaction results in EXOC1 degradation through the proteasome degradation pathway. As to quaternary structure, forms heterodimers with envelope protein E in the endoplasmic reticulum and Golgi. In terms of assembly, homodimer; in the endoplasmic reticulum and Golgi. Interacts with protein prM. Interacts with non-structural protein 1. Interacts with host HSPA5. Homodimer; Homohexamer when secreted. Interacts with envelope protein E. NS1 interacts with NS4B. Interacts with host complement protein CFH; this interaction leads to the degradation of C3. As to quaternary structure, interacts (via N-terminus) with serine protease NS3. In terms of assembly, forms a heterodimer with serine protease NS3. May form homooligomers. Forms a heterodimer with NS2B. Interacts with non-structural protein 2A (via N-terminus). Interacts with NS4B. Interacts with unphosphorylated RNA-directed RNA polymerase NS5; this interaction stimulates RNA-directed RNA polymerase NS5 guanylyltransferase activity. Interacts with host ILF2. As to quaternary structure, interacts with serine protease NS3. In terms of assembly, homodimer. Interacts with host STAT2; this interaction inhibits the phosphorylation of the latter, and, when all viral proteins are present (polyprotein), targets STAT2 for degradation. Interacts with serine protease NS3. The cofactor is Mn(2+). Mg(2+) is required as a cofactor. Post-translationally, specific enzymatic cleavages in vivo yield mature proteins. Cleavages in the lumen of endoplasmic reticulum are performed by host signal peptidase, whereas cleavages in the cytoplasmic side are performed by serine protease NS3. Signal cleavage at the 2K-4B site requires a prior NS3 protease-mediated cleavage at the 4A-2K site. Cleaved in post-Golgi vesicles by a host furin, releasing the mature small envelope protein M, and peptide pr. This cleavage is incomplete as up to 30% of viral particles still carry uncleaved prM. In terms of processing, N-glycosylated. Post-translationally, N-glycosylated. The excreted form is glycosylated and this is required for efficient secretion of the protein from infected cells. Acetylated by host KAT5. Acetylation modulates NS3 RNA-binding and unwinding activities and plays an important positive role for viral replication. In terms of processing, phosphorylated on serines residues. This phosphorylation may trigger NS5 nuclear localization.

The protein localises to the virion. It localises to the host nucleus. Its subcellular location is the host cytoplasm. It is found in the host perinuclear region. The protein resides in the secreted. The protein localises to the virion membrane. It localises to the host endoplasmic reticulum membrane. Its subcellular location is the host cell surface. The enzyme catalyses Selective hydrolysis of -Xaa-Xaa-|-Yaa- bonds in which each of the Xaa can be either Arg or Lys and Yaa can be either Ser or Ala.. It catalyses the reaction RNA(n) + a ribonucleoside 5'-triphosphate = RNA(n+1) + diphosphate. The catalysed reaction is a ribonucleoside 5'-triphosphate + H2O = a ribonucleoside 5'-diphosphate + phosphate + H(+). It carries out the reaction ATP + H2O = ADP + phosphate + H(+). The enzyme catalyses a 5'-end (5'-triphosphoguanosine)-ribonucleoside in mRNA + S-adenosyl-L-methionine = a 5'-end (N(7)-methyl 5'-triphosphoguanosine)-ribonucleoside in mRNA + S-adenosyl-L-homocysteine. It catalyses the reaction a 5'-end (N(7)-methyl 5'-triphosphoguanosine)-ribonucleoside in mRNA + S-adenosyl-L-methionine = a 5'-end (N(7)-methyl 5'-triphosphoguanosine)-(2'-O-methyl-ribonucleoside) in mRNA + S-adenosyl-L-homocysteine + H(+). Functionally, plays a role in virus budding by binding to the cell membrane and gathering the viral RNA into a nucleocapsid that forms the core of a mature virus particle. During virus entry, may induce genome penetration into the host cytoplasm after hemifusion induced by the surface proteins. Can migrate to the cell nucleus where it modulates host functions. Overcomes the anti-viral effects of host EXOC1 by sequestering and degrading the latter through the proteasome degradation pathway. Its function is as follows. Inhibits RNA silencing by interfering with host Dicer. Prevents premature fusion activity of envelope proteins in trans-Golgi by binding to envelope protein E at pH6.0. After virion release in extracellular space, gets dissociated from E dimers. In terms of biological role, acts as a chaperone for envelope protein E during intracellular virion assembly by masking and inactivating envelope protein E fusion peptide. prM is the only viral peptide matured by host furin in the trans-Golgi network probably to avoid catastrophic activation of the viral fusion activity in acidic Golgi compartment prior to virion release. prM-E cleavage is inefficient, and many virions are only partially matured. These uncleaved prM would play a role in immune evasion. Functionally, may play a role in virus budding. Exerts cytotoxic effects by activating a mitochondrial apoptotic pathway through M ectodomain. May display a viroporin activity. Its function is as follows. Binds to host cell surface receptor and mediates fusion between viral and cellular membranes. Efficient virus attachment to cell is, at least in part, mediated by host HSPA5. Envelope protein is synthesized in the endoplasmic reticulum in the form of heterodimer with protein prM. They play a role in virion budding in the ER, and the newly formed immature particle is covered with 60 spikes composed of heterodimer between precursor prM and envelope protein E. The virion is transported to the Golgi apparatus where the low pH causes dissociation of PrM-E heterodimers and formation of E homodimers. prM-E cleavage is inefficient, and many virions are only partially matured. These uncleaved prM would play a role in immune evasion. Involved in immune evasion, pathogenesis and viral replication. Once cleaved off the polyprotein, is targeted to three destinations: the viral replication cycle, the plasma membrane and the extracellular compartment. Essential for viral replication. Required for formation of the replication complex and recruitment of other non-structural proteins to the ER-derived membrane structures. Excreted as a hexameric lipoparticle that plays a role against host immune response. Antagonizing the complement function. Binds to the host macrophages and dendritic cells. Inhibits signal transduction originating from Toll-like receptor 3 (TLR3). In terms of biological role, component of the viral RNA replication complex that functions in virion assembly and antagonizes the host alpha/beta interferon antiviral response. Functionally, required cofactor for the serine protease function of NS3. May have membrane-destabilizing activity and form viroporins. Its function is as follows. Displays three enzymatic activities: serine protease, NTPase and RNA helicase. NS3 serine protease, in association with NS2B, performs its autocleavage and cleaves the polyprotein at dibasic sites in the cytoplasm: C-prM, NS2A-NS2B, NS2B-NS3, NS3-NS4A, NS4A-2K and NS4B-NS5. NS3 RNA helicase binds RNA and unwinds dsRNA in the 3' to 5' direction. Regulates the ATPase activity of the NS3 helicase activity. NS4A allows NS3 helicase to conserve energy during unwinding. In terms of biological role, functions as a signal peptide for NS4B and is required for the interferon antagonism activity of the latter. Functionally, induces the formation of ER-derived membrane vesicles where the viral replication takes place. Inhibits interferon (IFN)-induced host STAT1 phosphorylation and nuclear translocation, thereby preventing the establishment of cellular antiviral state by blocking the IFN-alpha/beta pathway. Inhibits STAT2 translocation in the nucleus after IFN-alpha treatment. Its function is as follows. Replicates the viral (+) and (-) RNA genome. Performs the capping of genomes in the cytoplasm. NS5 methylates viral RNA cap at guanine N-7 and ribose 2'-O positions. Besides its role in RNA genome replication, also prevents the establishment of cellular antiviral state by blocking the interferon-alpha/beta (IFN-alpha/beta) signaling pathway. Inhibits host TYK2 and STAT2 phosphorylation, thereby preventing activation of JAK-STAT signaling pathway. This Ardeidae (herons) protein is Genome polyprotein.